A 958-amino-acid polypeptide reads, in one-letter code: Glycine dehydrogenase (decarboxylating) (958 aa).

Lys-707 carries the post-translational modification N6-(pyridoxal phosphate)lysine.

The protein belongs to the GcvP family. In terms of assembly, the glycine cleavage system is composed of four proteins: P, T, L and H. It depends on pyridoxal 5'-phosphate as a cofactor.

It catalyses the reaction N(6)-[(R)-lipoyl]-L-lysyl-[glycine-cleavage complex H protein] + glycine + H(+) = N(6)-[(R)-S(8)-aminomethyldihydrolipoyl]-L-lysyl-[glycine-cleavage complex H protein] + CO2. The glycine cleavage system catalyzes the degradation of glycine. The P protein binds the alpha-amino group of glycine through its pyridoxal phosphate cofactor; CO(2) is released and the remaining methylamine moiety is then transferred to the lipoamide cofactor of the H protein. The polypeptide is Glycine dehydrogenase (decarboxylating) (Stutzerimonas stutzeri (strain A1501) (Pseudomonas stutzeri)).